The primary structure comprises 236 residues: Protein-L-isoaspartate O-methyltransferase 1 (236 aa).

Serine 86 is an active-site residue.

The protein belongs to the methyltransferase superfamily. L-isoaspartyl/D-aspartyl protein methyltransferase family.

The protein resides in the cytoplasm. It catalyses the reaction [protein]-L-isoaspartate + S-adenosyl-L-methionine = [protein]-L-isoaspartate alpha-methyl ester + S-adenosyl-L-homocysteine. In terms of biological role, catalyzes the methyl esterification of L-isoaspartyl residues in peptides and proteins that result from spontaneous decomposition of normal L-aspartyl and L-asparaginyl residues. It plays a role in the repair and/or degradation of damaged proteins. In Nitrosospira multiformis (strain ATCC 25196 / NCIMB 11849 / C 71), this protein is Protein-L-isoaspartate O-methyltransferase 1.